The following is an 839-amino-acid chain: Oligopeptide transporter phomP2 (839 aa).

The segment at 1 to 58 (MEADPKVPFTDEMNIQDEHNWESGSWSSSRRSNDSNVTLLSRRSSVEQHEDERQKDSD) is disordered. A compositionally biased stretch (low complexity) spans 23–36 (SGSWSSSRRSNDSN). 2 N-linked (GlcNAc...) asparagine glycosylation sites follow: asparagine 33 and asparagine 36. Positions 44–58 (SSVEQHEDERQKDSD) are enriched in basic and acidic residues. The next 6 helical transmembrane spans lie at 105 to 125 (VWLLSTFWVLAGCSISTVYYF), 177 to 197 (ALVVIAYWGSSYTAYGLGPLS), 210 to 230 (PWAITFLVTTQLTGYGLVGLY), 268 to 288 (VFMAIASAAFVYQWLPSFVFP), 315 to 335 (GFGLMDFSLDWNYVAFLSPLF), and 345 to 365 (FVGAALAVWITYPVAYFSDAL). N-linked (GlcNAc...) asparagine glycosylation is found at asparagine 386 and asparagine 398. Transmembrane regions (helical) follow at residues 415–435 (AMHFFWGFASASAMVTYAVLF), 478–498 (AWYALLLAVCLCLGTIQLYAG), 505–525 (WGLQLVVAISALFTLPCGMLF), and 585–605 (WELLVAQVYGTLLGPFVNWAV). Residues 629–646 (QGLGLGQGGGGGGGGGGQ) show a composition bias toward gly residues. A disordered region spans residues 629-654 (QGLGLGQGGGGGGGGGGQQQRAAGAH). A run of 3 helical transmembrane segments spans residues 665–685 (NFFSSSVIWGVMGPARVFGGG), 697–717 (WLLPSGFAVGAAAVLLLWLIH), and 728–748 (WPLHPAIIFHGASLFPVFPTT). Asparagine 749 is a glycosylation site (N-linked (GlcNAc...) asparagine). Residues 781 to 801 (AGLDCGAQLVQMVLGVAFLVF) form a helical membrane-spanning segment.

It belongs to the oligopeptide OPT transporter family.

It is found in the membrane. Oligopeptide transporter; part of the gene cluster that mediates the biosynthesis of the phomopsins, a group of hexapeptide mycotoxins which infects lupins and causes lupinosis disease in livestock. In Diaporthe leptostromiformis (Lupinosis disease fungus), this protein is Oligopeptide transporter phomP2.